Here is a 326-residue protein sequence, read N- to C-terminus: Neuferricin homolog (326 aa).

A signal peptide spans 1-34; sequence MDKNRRRTDDAGLMTKTLAGIAALVFFLSFICSS. The 100-residue stretch at 98-197 folds into the Cytochrome b5 heme-binding domain; that stretch reads KHVFTPEQLH…KEYPLVGVVA (100 aa).

It belongs to the cytochrome b5 family. MAPR subfamily.

The protein localises to the secreted. Its function is as follows. Heme-binding protein. This chain is Neuferricin homolog (tag-131), found in Caenorhabditis elegans.